A 288-amino-acid polypeptide reads, in one-letter code: B3 domain-containing protein At2g35310 (288 aa).

DNA-binding regions (TF-B3) lie at residues 19 to 114 (FFKV…FMQD) and 196 to 288 (AEFS…VSKP).

The protein localises to the nucleus. The polypeptide is B3 domain-containing protein At2g35310 (Arabidopsis thaliana (Mouse-ear cress)).